Here is a 315-residue protein sequence, read N- to C-terminus: MSIPEVGKKIRVTVPSTTANLGPGFDCLGAALDLYNEFIFTRIEGGGDRFDLIMESTDGNHLRGGPENLVFRAAQKVWENANIDPFALEARVKLAVPPARGLGSSATAIVAGLIGANAIMNSPLSKEKLLELAIDIEGHPDNVVPSLLGGLCLTARSSSQRWRIIRCDWHYSIKAVVAIPAIRLSTSEARKVMPKNVPISDAVTNMGALTLLLNGLKAGNAELIKEGMFDKLHEPYRWKLIKGGLEVKDAALNAGALGCAISGAGPSILALCKEENGKNVSQAMVKAWENSGVASRAPFLNVQTTGSQFSTISGK.

97–107 (PPARGLGSSAT) is a binding site for ATP.

Belongs to the GHMP kinase family. Homoserine kinase subfamily.

The protein localises to the cytoplasm. The enzyme catalyses L-homoserine + ATP = O-phospho-L-homoserine + ADP + H(+). It participates in amino-acid biosynthesis; L-threonine biosynthesis; L-threonine from L-aspartate: step 4/5. Functionally, catalyzes the ATP-dependent phosphorylation of L-homoserine to L-homoserine phosphate. The polypeptide is Homoserine kinase (Prochlorococcus marinus (strain MIT 9215)).